The chain runs to 90 residues: Evasin P1128 (90 aa).

Residues 1–18 (MFIALGIQLFVAVTYAAG) form the signal peptide. Intrachain disulfides connect Cys-29/Cys-51, Cys-33/Cys-53, and Cys-44/Cys-64. Asn-32 carries N-linked (GlcNAc...) asparagine glycosylation.

The protein localises to the secreted. Its function is as follows. Salivary chemokine-binding protein which binds to host chemokines CXCL1, CXCL2, CXCL3, CXCL5 and CXCL8. The chain is Evasin P1128 from Ixodes ricinus (Common tick).